The chain runs to 224 residues: Thiamine-phosphate synthase (224 aa).

4-amino-2-methyl-5-(diphosphooxymethyl)pyrimidine contacts are provided by residues 43–47 (QYRPK) and asparagine 75. Mg(2+) contacts are provided by aspartate 76 and aspartate 95. Serine 114 lines the 4-amino-2-methyl-5-(diphosphooxymethyl)pyrimidine pocket. Residue 141-143 (SAT) coordinates 2-[(2R,5Z)-2-carboxy-4-methylthiazol-5(2H)-ylidene]ethyl phosphate. Lysine 144 provides a ligand contact to 4-amino-2-methyl-5-(diphosphooxymethyl)pyrimidine. Glycine 171 serves as a coordination point for 2-[(2R,5Z)-2-carboxy-4-methylthiazol-5(2H)-ylidene]ethyl phosphate.

This sequence belongs to the thiamine-phosphate synthase family. Requires Mg(2+) as cofactor.

The enzyme catalyses 2-[(2R,5Z)-2-carboxy-4-methylthiazol-5(2H)-ylidene]ethyl phosphate + 4-amino-2-methyl-5-(diphosphooxymethyl)pyrimidine + 2 H(+) = thiamine phosphate + CO2 + diphosphate. The catalysed reaction is 2-(2-carboxy-4-methylthiazol-5-yl)ethyl phosphate + 4-amino-2-methyl-5-(diphosphooxymethyl)pyrimidine + 2 H(+) = thiamine phosphate + CO2 + diphosphate. It carries out the reaction 4-methyl-5-(2-phosphooxyethyl)-thiazole + 4-amino-2-methyl-5-(diphosphooxymethyl)pyrimidine + H(+) = thiamine phosphate + diphosphate. Its pathway is cofactor biosynthesis; thiamine diphosphate biosynthesis; thiamine phosphate from 4-amino-2-methyl-5-diphosphomethylpyrimidine and 4-methyl-5-(2-phosphoethyl)-thiazole: step 1/1. Functionally, condenses 4-methyl-5-(beta-hydroxyethyl)thiazole monophosphate (THZ-P) and 2-methyl-4-amino-5-hydroxymethyl pyrimidine pyrophosphate (HMP-PP) to form thiamine monophosphate (TMP). The sequence is that of Thiamine-phosphate synthase from Methylococcus capsulatus (strain ATCC 33009 / NCIMB 11132 / Bath).